Here is a 1042-residue protein sequence, read N- to C-terminus: Ubiquitin carboxyl-terminal hydrolase 38 (1042 aa).

In terms of domain architecture, USP spans 445–949 (TGLINLGNTC…TAYVLLYKKQ (505 aa)). The active-site Nucleophile is the Cys-454. The active-site Proton acceptor is the His-857.

The protein belongs to the peptidase C19 family. Interacts with isoform 1 of FBXW7; this interaction prevents FBXW7-mediated degradation of MYC.

It is found in the cytoplasm. The protein localises to the nucleus. It catalyses the reaction Thiol-dependent hydrolysis of ester, thioester, amide, peptide and isopeptide bonds formed by the C-terminal Gly of ubiquitin (a 76-residue protein attached to proteins as an intracellular targeting signal).. Its function is as follows. Deubiquitinating enzyme that plays a role in various cellular processes, including DNA repair, cell cycle regulation, and immune response. Plays a role in the inhibition of type I interferon signaling by mediating the 'Lys-33' to 'Lys-48' ubiquitination transition of TBK1 leading to its degradation. Cleaves the ubiquitin chain from the histone demethylase LSD1/KDM1A and prevents it from degradation by the 26S proteasome, thus maintaining LSD1 protein level in cells. Plays a role in the DNA damage response by regulating the deacetylase activity of HDAC1. Mechanistically, removes the 'Lys-63'-linked ubiquitin chain promoting the deacetylase activity of HDAC1 in response to DNA damage. Also acts as a specific deubiquitinase of histone deacetylase 3/HDAC3 and cleaves its 'Lys-63'-linked ubiquitin chains to lower its histone deacetylase activity. Regulates MYC levels and cell proliferation via antagonizing ubiquitin E3 ligase FBXW7 thereby preventing MYC 'Lys-48'-linked ubiquitination and degradation. Participates in antiviral response by removing both 'Lys-48'-linked and 'Lys-63'-linked polyubiquitination of Zika virus envelope protein E. Constitutively associated with IL-33R/IL1RL1, deconjugates its 'Lys-27'-linked polyubiquitination resulting in its autophagic degradation. The sequence is that of Ubiquitin carboxyl-terminal hydrolase 38 (Usp38) from Mus musculus (Mouse).